Consider the following 178-residue polypeptide: ATP synthase subunit delta (178 aa).

The protein belongs to the ATPase delta chain family. As to quaternary structure, F-type ATPases have 2 components, F(1) - the catalytic core - and F(0) - the membrane proton channel. F(1) has five subunits: alpha(3), beta(3), gamma(1), delta(1), epsilon(1). F(0) has three main subunits: a(1), b(2) and c(10-14). The alpha and beta chains form an alternating ring which encloses part of the gamma chain. F(1) is attached to F(0) by a central stalk formed by the gamma and epsilon chains, while a peripheral stalk is formed by the delta and b chains.

The protein resides in the cell inner membrane. In terms of biological role, f(1)F(0) ATP synthase produces ATP from ADP in the presence of a proton or sodium gradient. F-type ATPases consist of two structural domains, F(1) containing the extramembraneous catalytic core and F(0) containing the membrane proton channel, linked together by a central stalk and a peripheral stalk. During catalysis, ATP synthesis in the catalytic domain of F(1) is coupled via a rotary mechanism of the central stalk subunits to proton translocation. This protein is part of the stalk that links CF(0) to CF(1). It either transmits conformational changes from CF(0) to CF(1) or is implicated in proton conduction. In Polynucleobacter necessarius subsp. necessarius (strain STIR1), this protein is ATP synthase subunit delta.